The chain runs to 203 residues: Small ribosomal subunit protein uS4 (203 aa).

The S4 RNA-binding domain occupies 93-156; the sequence is RRLDNVVYRL…LKVPAILEAV (64 aa).

It belongs to the universal ribosomal protein uS4 family. In terms of assembly, part of the 30S ribosomal subunit. Contacts protein S5. The interaction surface between S4 and S5 is involved in control of translational fidelity.

One of the primary rRNA binding proteins, it binds directly to 16S rRNA where it nucleates assembly of the body of the 30S subunit. In terms of biological role, with S5 and S12 plays an important role in translational accuracy. This Streptococcus gordonii (strain Challis / ATCC 35105 / BCRC 15272 / CH1 / DL1 / V288) protein is Small ribosomal subunit protein uS4.